Here is a 963-residue protein sequence, read N- to C-terminus: Glycine dehydrogenase (decarboxylating) (963 aa).

Residue Lys-707 is modified to N6-(pyridoxal phosphate)lysine.

The protein belongs to the GcvP family. The glycine cleavage system is composed of four proteins: P, T, L and H. Requires pyridoxal 5'-phosphate as cofactor.

It carries out the reaction N(6)-[(R)-lipoyl]-L-lysyl-[glycine-cleavage complex H protein] + glycine + H(+) = N(6)-[(R)-S(8)-aminomethyldihydrolipoyl]-L-lysyl-[glycine-cleavage complex H protein] + CO2. In terms of biological role, the glycine cleavage system catalyzes the degradation of glycine. The P protein binds the alpha-amino group of glycine through its pyridoxal phosphate cofactor; CO(2) is released and the remaining methylamine moiety is then transferred to the lipoamide cofactor of the H protein. The chain is Glycine dehydrogenase (decarboxylating) from Dechloromonas aromatica (strain RCB).